The sequence spans 286 residues: Acetyl-coenzyme A carboxylase carboxyl transferase subunit beta (286 aa).

The CoA carboxyltransferase N-terminal domain maps to 27–286 (LMTKCPKCKL…HSEETNHATI (260 aa)). 4 residues coordinate Zn(2+): cysteine 31, cysteine 34, cysteine 50, and cysteine 52. The C4-type zinc finger occupies 31–52 (CPKCKLIQYTKQLEANLKVCVC).

Belongs to the AccD/PCCB family. Acetyl-CoA carboxylase is a heterohexamer composed of biotin carboxyl carrier protein (AccB), biotin carboxylase (AccC) and two subunits each of ACCase subunit alpha (AccA) and ACCase subunit beta (AccD). It depends on Zn(2+) as a cofactor.

The protein localises to the cytoplasm. The enzyme catalyses N(6)-carboxybiotinyl-L-lysyl-[protein] + acetyl-CoA = N(6)-biotinyl-L-lysyl-[protein] + malonyl-CoA. The protein operates within lipid metabolism; malonyl-CoA biosynthesis; malonyl-CoA from acetyl-CoA: step 1/1. In terms of biological role, component of the acetyl coenzyme A carboxylase (ACC) complex. Biotin carboxylase (BC) catalyzes the carboxylation of biotin on its carrier protein (BCCP) and then the CO(2) group is transferred by the transcarboxylase to acetyl-CoA to form malonyl-CoA. The protein is Acetyl-coenzyme A carboxylase carboxyl transferase subunit beta of Exiguobacterium sibiricum (strain DSM 17290 / CCUG 55495 / CIP 109462 / JCM 13490 / 255-15).